The sequence spans 169 residues: Peptide methionine sulfoxide reductase MsrA (169 aa).

The active site involves C10.

It belongs to the MsrA Met sulfoxide reductase family.

It carries out the reaction L-methionyl-[protein] + [thioredoxin]-disulfide + H2O = L-methionyl-(S)-S-oxide-[protein] + [thioredoxin]-dithiol. It catalyses the reaction [thioredoxin]-disulfide + L-methionine + H2O = L-methionine (S)-S-oxide + [thioredoxin]-dithiol. In terms of biological role, has an important function as a repair enzyme for proteins that have been inactivated by oxidation. Catalyzes the reversible oxidation-reduction of methionine sulfoxide in proteins to methionine. The protein is Peptide methionine sulfoxide reductase MsrA of Streptococcus pyogenes serotype M12 (strain MGAS2096).